We begin with the raw amino-acid sequence, 297 residues long: Probable endonuclease 4 (297 aa).

The Zn(2+) site is built by His69, His110, Glu145, Asp179, His182, His214, Asp227, His229, and Glu259.

This sequence belongs to the AP endonuclease 2 family. Zn(2+) serves as cofactor.

The enzyme catalyses Endonucleolytic cleavage to 5'-phosphooligonucleotide end-products.. In terms of biological role, endonuclease IV plays a role in DNA repair. It cleaves phosphodiester bonds at apurinic or apyrimidinic (AP) sites, generating a 3'-hydroxyl group and a 5'-terminal sugar phosphate. This is Probable endonuclease 4 from Bacillus velezensis (strain DSM 23117 / BGSC 10A6 / LMG 26770 / FZB42) (Bacillus amyloliquefaciens subsp. plantarum).